Consider the following 389-residue polypeptide: Nicotinamide-nucleotide adenylyltransferase (389 aa).

A Nuclear localization signal motif is present at residues 380 to 383 (KKQK).

It belongs to the eukaryotic NMN adenylyltransferase family. Abundantly expressed in neuronal and muscle cells. Present at relatively low levels at the neuromuscular junction. Expressed in the eye; present in photoreceptor cells and various neurons in the lamina cortex and medulla cortex and at low levels in the lamina.

It is found in the nucleus. Its subcellular location is the cytoplasm. The protein localises to the presynaptic active zone. It carries out the reaction beta-nicotinamide D-ribonucleotide + ATP + H(+) = diphosphate + NAD(+). The catalysed reaction is nicotinate beta-D-ribonucleotide + ATP + H(+) = deamido-NAD(+) + diphosphate. The protein operates within cofactor biosynthesis; NAD(+) biosynthesis; NAD(+) from nicotinamide D-ribonucleotide: step 1/1. It functions in the pathway cofactor biosynthesis; NAD(+) biosynthesis; deamido-NAD(+) from nicotinate D-ribonucleotide: step 1/1. Catalyzes the formation of NAD(+) from nicotinamide mononucleotide (NMN) and ATP. Essential for viability. Stress-response chaperone protein that prevents toxic aggregation of proteins and promotes proteasome-mediated degradation of misfolded proteins; this is independent of its NAD(+) synthesis activity. Neuroprotective in response to toxic protein aggregation, for example by overexpressed Atx-1/ataxin-1. Required for maintenance and integrity of mature neurons, protecting them from neuronal activity-induced neurodegeneration. Required for the maintenance of axonal and dendritic integrity in both central and peripheral neurons. Chaperone function and neuroprotective roles are largely independent of NAD(+) synthesis activity. In terms of biological role, catalyzes the formation of NAD(+) from nicotinamide mononucleotide (NMN) and ATP. Has, or stimulates, chaperone holdase activity but not refoldase activity. Does not have neuroprotective properties and may stimulate apoptosis and neurodegeneration in response to toxic protein aggregates. Its function is as follows. Catalyzes the formation of NAD(+) from nicotinamide mononucleotide (NMN) and ATP. Has, or stimulates, chaperone holdase and refoldase activity. Neuroprotective and reduces the toxic load of protein aggregates, preventing apoptosis and neurodegeneration. Promotes clearance of nuclear misfolded protein aggregates. In Drosophila melanogaster (Fruit fly), this protein is Nicotinamide-nucleotide adenylyltransferase.